Here is a 278-residue protein sequence, read N- to C-terminus: Chitosanase (278 aa).

The N-terminal stretch at 1–40 is a signal peptide; the sequence is MHSQHRTARIALAVVLTAIPASLATAGVGYASTQASTAVK. The Proton donor role is filled by E62. Residue D80 is the Nucleophile of the active site.

Belongs to the glycosyl hydrolase 46 family.

Its subcellular location is the secreted. It catalyses the reaction Endohydrolysis of beta-(1-&gt;4)-linkages between D-glucosamine residues in a partly acetylated chitosan.. Functionally, aids in the defense against invading fungal pathogens by degrading their cell wall chitosan. The chain is Chitosanase (csn) from Streptomyces sp. (strain N174).